The chain runs to 1209 residues: Major DNA-binding protein (1209 aa).

The tract at residues 290-312 is disordered; that stretch reads NAGKGSGRAQRQGDGSGSKNSAS. A zinc finger lies at 503–516; that stretch reads CGLCNQATRPACAH. The short motif at 849-850 is the Required for filament formation element; that stretch reads FW. A required for nuclear localization region spans residues 1182–1209; it reads QKRSLPDDILFDMGAPPEKKSGLTFDML.

This sequence belongs to the herpesviridae major DNA-binding protein family. As to quaternary structure, homooligomers. Forms double-helical filaments necessary for the formation of replication compartments within the host nucleus. Interacts with the origin-binding protein. Interacts with the helicase primase complex; this interaction stimulates primer synthesis activity of the helicase-primase complex. Interacts with the DNA polymerase. Interacts with the alkaline exonuclease; this interaction increases its nuclease processivity.

The protein localises to the host nucleus. Its function is as follows. Plays several crucial roles in viral infection. Participates in the opening of the viral DNA origin to initiate replication by interacting with the origin-binding protein. May disrupt loops, hairpins and other secondary structures present on ssDNA to reduce and eliminate pausing of viral DNA polymerase at specific sites during elongation. Promotes viral DNA recombination by performing strand-transfer, characterized by the ability to transfer a DNA strand from a linear duplex to a complementary single-stranded DNA circle. Can also catalyze the renaturation of complementary single strands. Additionally, reorganizes the host cell nucleus, leading to the formation of prereplicative sites and replication compartments. This process is driven by the protein which can form double-helical filaments in the absence of DNA. This chain is Major DNA-binding protein, found in Equine herpesvirus 1 (strain V592) (EHV-1).